The following is a 249-amino-acid chain: uncharacterized protein (249 aa).

2 consecutive transmembrane segments (helical) span residues 49 to 69 (ILLS…CYLL) and 223 to 243 (IVMS…VHHL).

It localises to the cell membrane. This is an uncharacterized protein from Bacillus anthracis.